The chain runs to 588 residues: Sulfite reductase [NADPH] hemoprotein beta-component (588 aa).

[4Fe-4S] cluster contacts are provided by C442, C448, C487, and C491. Position 491 (C491) interacts with siroheme.

The protein belongs to the nitrite and sulfite reductase 4Fe-4S domain family. In terms of assembly, alpha(8)-beta(8). The alpha component is a flavoprotein, the beta component is a hemoprotein. The cofactor is siroheme. Requires [4Fe-4S] cluster as cofactor.

The enzyme catalyses hydrogen sulfide + 3 NADP(+) + 3 H2O = sulfite + 3 NADPH + 4 H(+). It participates in sulfur metabolism; hydrogen sulfide biosynthesis; hydrogen sulfide from sulfite (NADPH route): step 1/1. Component of the sulfite reductase complex that catalyzes the 6-electron reduction of sulfite to sulfide. This is one of several activities required for the biosynthesis of L-cysteine from sulfate. The sequence is that of Sulfite reductase [NADPH] hemoprotein beta-component from Actinobacillus pleuropneumoniae serotype 3 (strain JL03).